Reading from the N-terminus, the 577-residue chain is Arginine--tRNA ligase (577 aa).

The short motif at 122–132 (PNVAKEMHVGH) is the 'HIGH' region element.

This sequence belongs to the class-I aminoacyl-tRNA synthetase family. Monomer.

Its subcellular location is the cytoplasm. It carries out the reaction tRNA(Arg) + L-arginine + ATP = L-arginyl-tRNA(Arg) + AMP + diphosphate. The sequence is that of Arginine--tRNA ligase from Shigella flexneri serotype 5b (strain 8401).